The chain runs to 238 residues: Uridylate kinase (238 aa).

12–15 (KLSG) contributes to the ATP binding site. Gly54 provides a ligand contact to UMP. ATP-binding residues include Gly55 and Arg59. UMP is bound by residues Asp74 and 135 to 142 (TGNPFFTT). Thr162, Tyr168, and Asp171 together coordinate ATP.

This sequence belongs to the UMP kinase family. As to quaternary structure, homohexamer.

The protein resides in the cytoplasm. It carries out the reaction UMP + ATP = UDP + ADP. The protein operates within pyrimidine metabolism; CTP biosynthesis via de novo pathway; UDP from UMP (UMPK route): step 1/1. Inhibited by UTP. Its function is as follows. Catalyzes the reversible phosphorylation of UMP to UDP. This is Uridylate kinase from Methylobacillus flagellatus (strain ATCC 51484 / DSM 6875 / VKM B-1610 / KT).